Reading from the N-terminus, the 230-residue chain is Voltage-gated hydrogen channel 1 (230 aa).

Over 1–58 (MAGCLRHFTSVGDDTKKKAWKEEDVEVAHEEEPKNTPHPFIASYSFRGALKWLFSSHK) the chain is Cytoplasmic. The helical transmembrane segment at 59-79 (FQIVIICLVILDALFVLVEVL) threads the bilayer. Residues 80 to 96 (LDLELLAEKVDHIIPEI) are Extracellular-facing. A helical transmembrane segment spans residues 97–119 (FHYLSISVLSFFILEIAGKLYAF). Residues 120–127 (RLEFFHHK) lie on the Cytoplasmic side of the membrane. The chain crosses the membrane as a helical span at residues 128–148 (FEVFDAAIVVISFIIDIVYIS). The Extracellular segment spans residues 149-155 (REDIFNA). Residues 156 to 176 (VGLLILLRLWRVARIVNGIIV) form a helical membrane-spanning segment. Residues 177–226 (SVKTQAEDKIHRLKENQESLLEKVAHLEQQCAQQEQEIVRLQTLLQQHNV) adopt a coiled-coil conformation. The Cytoplasmic portion of the chain corresponds to 177 to 230 (SVKTQAEDKIHRLKENQESLLEKVAHLEQQCAQQEQEIVRLQTLLQQHNVFPAS).

This sequence belongs to the hydrogen channel family. As to quaternary structure, homodimer.

The protein localises to the membrane. The protein resides in the cell membrane. Functionally, mediates the voltage-dependent proton permeability of excitable membranes. Forms a proton-selective channel through which protons may pass in accordance with their electrochemical gradient. The polypeptide is Voltage-gated hydrogen channel 1 (hvcn1) (Xenopus tropicalis (Western clawed frog)).